The primary structure comprises 569 residues: 4-coumarate--CoA ligase 2 (569 aa).

6 residues coordinate ATP: Ser-219, Ser-220, Gly-221, Thr-222, Thr-223, and Lys-227. The (E)-4-coumaroyl-AMP site is built by Phe-269 and Ser-273. Arg-290 is a binding site for CoA. The tract at residues 292–361 is SBD1; it reads EMGAMLGAIE…ARLPQAIFGQ (70 aa). Residues Ala-339, Gln-361, Gly-362, Thr-366, and Met-374 each coordinate (E)-4-coumaroyl-AMP. The ATP site is built by Gln-361, Gly-362, and Thr-366. The tract at residues 362–429 is SBD2; it reads GYGMTEAGPV…IRGPQIMKGY (68 aa). The ATP site is built by Asp-450 and Arg-465. Lys-467 and Lys-471 together coordinate (E)-4-coumaroyl-AMP. Positions 473 and 474 each coordinate CoA. ATP is bound at residue Lys-556.

This sequence belongs to the ATP-dependent AMP-binding enzyme family. The cofactor is Mg(2+). As to expression, expressed in roots, stems, leaf blades, leaf sheaths and spikelets.

The enzyme catalyses (E)-ferulate + ATP + CoA = (E)-feruloyl-CoA + AMP + diphosphate. The catalysed reaction is (E)-4-coumarate + ATP + CoA = (E)-4-coumaroyl-CoA + AMP + diphosphate. It carries out the reaction (E)-caffeate + ATP + CoA = (E)-caffeoyl-CoA + AMP + diphosphate. It catalyses the reaction (E)-cinnamate + ATP + CoA = (E)-cinnamoyl-CoA + AMP + diphosphate. The enzyme catalyses (E)-ferulate + ATP + H(+) = (E)-feruloyl-AMP + diphosphate. The catalysed reaction is (E)-feruloyl-AMP + CoA = (E)-feruloyl-CoA + AMP + H(+). It carries out the reaction (E)-4-coumarate + ATP + H(+) = (E)-4-coumaroyl-AMP + diphosphate. It catalyses the reaction (E)-4-coumaroyl-AMP + CoA = (E)-4-coumaroyl-CoA + AMP + H(+). The enzyme catalyses (E)-caffeate + ATP + H(+) = (E)-caffeoyl-AMP + diphosphate. The catalysed reaction is (E)-caffeoyl-AMP + CoA = (E)-caffeoyl-CoA + AMP + H(+). The protein operates within phytoalexin biosynthesis; 3,4',5-trihydroxystilbene biosynthesis; 3,4',5-trihydroxystilbene from trans-4-coumarate: step 1/2. Its function is as follows. Involved in the phenylpropanoid metabolism by mediating the activation of a number of hydroxycinnamates for the biosynthesis of monolignols and other phenolic secondary metabolites. Catalyzes the formation of CoA esters of cinnamate, 4-coumarate, caffeate and ferulate. Is more efficient with substrates in the following order: ferulate &gt; 4-coumarate &gt; caffeate &gt; cinnamate. Cannot convert sinapate to its corresponding CoA ester. Follows a two-step reaction mechanism, wherein the carboxylate substrate first undergoes adenylation by ATP, followed by a thioesterification in the presence of CoA to yield the final CoA thioester. The chain is 4-coumarate--CoA ligase 2 from Oryza sativa subsp. japonica (Rice).